The sequence spans 549 residues: Beta-hexosaminidase Amuc_0868 (549 aa).

Positions 1 to 28 are cleaved as a signal peptide; sequence MISKCTFSATVFSLFSLCWGAPSSPVLE. Residue R161 coordinates substrate. Catalysis depends on charge relay system residues D190 and H260. Substrate is bound at residue D326. The Charge relay system role is filled by E327. Residues W393, 420-422, and 474-476 contribute to the substrate site; these read YFD and WTE. Residues 526–549 are disordered; it reads GVNYKRPDNGAPAQPKAVITRERR.

The protein belongs to the glycosyl hydrolase 20 family.

It catalyses the reaction Hydrolysis of terminal non-reducing N-acetyl-D-hexosamine residues in N-acetyl-beta-D-hexosaminides.. Inhibited strongly by Cu(2+), Zn(2+), Cd(2+) and Ni(2+) ions. No effect on activity with Na(+), Li(+), K(+), Ca(2+), Mg(2+) or Mn(2+) ions. Potentially capable of cleaving the specific glycoside linkages in the process of mucin degradation in human intestinal tract. Hydrolyzes chromogenic substrates pNP-beta-GlcNAc with high activity and pNP-beta-GalNAc to a lesser extent, but not pNP-beta-glucose or pNP-beta-galactose. The polypeptide is Beta-hexosaminidase Amuc_0868 (Akkermansia muciniphila (strain ATCC BAA-835 / DSM 22959 / JCM 33894 / BCRC 81048 / CCUG 64013 / CIP 107961 / Muc)).